We begin with the raw amino-acid sequence, 780 residues long: Aconitate hydratase, mitochondrial (780 aa).

A mitochondrion-targeting transit peptide spans 1 to 27; sequence MAPYSLLVTRLQKALGVRQYHVASVLC. At Lys-31 the chain carries N6-succinyllysine. At Lys-50 the chain carries N6-acetyllysine; alternate. Lys-50 is subject to N6-succinyllysine; alternate. Gln-99 lines the substrate pocket. N6-acetyllysine; alternate occurs at positions 138 and 144. Residues Lys-138 and Lys-144 each carry the N6-succinyllysine; alternate modification. A substrate-binding site is contributed by 192 to 194; that stretch reads DSH. Lys-233 bears the N6-acetyllysine; alternate mark. Lys-233 bears the N6-succinyllysine; alternate mark. Residue Cys-385 participates in [4Fe-4S] cluster binding. N6-succinyllysine is present on Lys-411. 2 residues coordinate [4Fe-4S] cluster: Cys-448 and Cys-451. The substrate site is built by Arg-474 and Arg-479. N6-acetyllysine; alternate occurs at positions 517 and 523. Lys-517 and Lys-523 each carry N6-succinyllysine; alternate. Positions 524 to 537 are enriched in basic and acidic residues; it reads LEAPDADELPRSDF. Residues 524–560 form a disordered region; the sequence is LEAPDADELPRSDFDPGQDTYQHPPKDSSGQRVDVSP. Lys-549 is modified (N6-succinyllysine). Positions 551–560 are enriched in polar residues; the sequence is SSGQRVDVSP. Ser-559 is modified (phosphoserine). Residue Lys-573 is modified to N6-acetyllysine; alternate. At Lys-573 the chain carries N6-succinyllysine; alternate. Residues Lys-577 and Lys-591 each carry the N6-succinyllysine modification. N6-acetyllysine; alternate is present on Lys-605. The residue at position 605 (Lys-605) is an N6-succinyllysine; alternate. Arg-607 is a binding site for substrate. Residue Lys-628 is modified to N6-succinyllysine. Position 670 is a phosphoserine (Ser-670). Residue 670–671 participates in substrate binding; the sequence is SR. Lys-689 is subject to N6-succinyllysine. N6-acetyllysine; alternate is present on residues Lys-723 and Lys-730. N6-succinyllysine; alternate occurs at positions 723 and 730. N6-acetyllysine occurs at positions 736, 739, and 743.

Belongs to the aconitase/IPM isomerase family. In terms of assembly, monomer. Requires [4Fe-4S] cluster as cofactor. In terms of processing, forms covalent cross-links mediated by transglutaminase TGM2, between a glutamine and the epsilon-amino group of a lysine residue, forming homopolymers and heteropolymers.

Its subcellular location is the mitochondrion. It carries out the reaction citrate = D-threo-isocitrate. Its pathway is carbohydrate metabolism; tricarboxylic acid cycle; isocitrate from oxaloacetate: step 2/2. Its function is as follows. Catalyzes the isomerization of citrate to isocitrate via cis-aconitate. The sequence is that of Aconitate hydratase, mitochondrial (Aco2) from Mus musculus (Mouse).